The sequence spans 388 residues: Beta-1,4-galactosyltransferase 5 (388 aa).

Topologically, residues 1–14 are cytoplasmic; it reads MRARRGLLRLPRRS. Residues 15–35 form a helical; Signal-anchor for type II membrane protein membrane-spanning segment; that stretch reads LLAALFFFSLSSSLLYFVYVA. Residues 36-388 are Lumenal-facing; that stretch reads PGIVNTYLFM…TPELAQVNEY (353 aa). Asparagine 77, asparagine 81, asparagine 90, asparagine 111, and asparagine 128 each carry an N-linked (GlcNAc...) asparagine glycan. Cysteine 114 and cysteine 158 form a disulfide bridge. UDP-alpha-D-galactose is bound by residues 169–173, 208–210, 235–236, tyrosine 264, and tryptophan 296; these read PFRNR, FNR, and VD. Cysteine 229 and cysteine 248 are joined by a disulfide. Aspartate 236 contributes to the Mn(2+) binding site. 298–301 is a binding site for N-acetyl-D-glucosamine; that stretch reads GEDD. Position 329 (histidine 329) interacts with Mn(2+). 329-330 is a UDP-alpha-D-galactose binding site; it reads HH. Arginine 340 serves as a coordination point for N-acetyl-D-glucosamine. Residues asparagine 364 and asparagine 373 are each glycosylated (N-linked (GlcNAc...) asparagine).

It belongs to the glycosyltransferase 7 family. The cofactor is Mn(2+). Ubiquitously expressed.

The protein localises to the golgi apparatus. The protein resides in the golgi stack membrane. The catalysed reaction is a beta-D-glucosyl-(1&lt;-&gt;1')-N-acylsphing-4-enine + UDP-alpha-D-galactose = a beta-D-Gal-(1-&gt;4)-beta-D-Glc-(1&lt;-&gt;1)-Cer(d18:1(4E)) + UDP + H(+). Its pathway is protein modification; protein glycosylation. The protein operates within sphingolipid metabolism. In terms of biological role, catalyzes the synthesis of lactosylceramide (LacCer) via the transfer of galactose from UDP-galactose to glucosylceramide (GlcCer). LacCer is the starting point in the biosynthesis of all gangliosides (membrane-bound glycosphingolipids) which play pivotal roles in the CNS including neuronal maturation and axonal and myelin formation. Plays a role in the glycosylation of BMPR1A and regulation of its protein stability. Essential for extraembryonic development during early embryogenesis. In Homo sapiens (Human), this protein is Beta-1,4-galactosyltransferase 5.